The primary structure comprises 471 residues: ATP synthase subunit beta (471 aa).

ATP is bound at residue 156–163 (GGAGVGKT).

Belongs to the ATPase alpha/beta chains family. F-type ATPases have 2 components, CF(1) - the catalytic core - and CF(0) - the membrane proton channel. CF(1) has five subunits: alpha(3), beta(3), gamma(1), delta(1), epsilon(1). CF(0) has three main subunits: a(1), b(2) and c(9-12). The alpha and beta chains form an alternating ring which encloses part of the gamma chain. CF(1) is attached to CF(0) by a central stalk formed by the gamma and epsilon chains, while a peripheral stalk is formed by the delta and b chains.

Its subcellular location is the cell inner membrane. The catalysed reaction is ATP + H2O + 4 H(+)(in) = ADP + phosphate + 5 H(+)(out). In terms of biological role, produces ATP from ADP in the presence of a proton gradient across the membrane. The catalytic sites are hosted primarily by the beta subunits. The chain is ATP synthase subunit beta from Nitratidesulfovibrio vulgaris (strain DSM 19637 / Miyazaki F) (Desulfovibrio vulgaris).